The primary structure comprises 338 residues: Anthocyanidin reductase ((2S)-flavan-3-ol-forming) (338 aa).

Residues 18-21, Lys-48, 87-90, and Tyr-168 each bind NADP(+); these read TGFV and VATP.

It belongs to the NAD(P)-dependent epimerase/dehydratase family. Dihydroflavonol-4-reductase subfamily.

It catalyses the reaction a (2S,3R)-flavan-3-ol + 2 NADP(+) = an anthocyanidin with a 3-hydroxy group + 2 NADPH + 2 H(+). The enzyme catalyses a (2S,3S)-flavan-3-ol + 2 NADP(+) = an anthocyanidin with a 3-hydroxy group + 2 NADPH + 2 H(+). The protein operates within secondary metabolite biosynthesis; flavonoid biosynthesis. Functionally, produces the terminal flavan-3-ol monomers required for the formation of proanthocyanidins or condensed tannins in leaves and flowers, as well as in the skin and seeds of developing berries. Behaves as a reductase and as a C-3 epimerase. Catalyzes the double reduction of anthocyanidins, producing a mixture of (2S,3S)- and (2S,3R)-flavan-3-ols. The enzyme catalyzes sequential hydride transfers to C-2 and C-4, respectively and epimerization at C-3 is achieved by tautomerization that occurs between the two hydride transfers. Converts cyanidin, pelargonidin and delphinidin into catechin and epicatechin, afzelechin and epiafzelechin, and gallocatechin and epigallocatechin respectively. In Vitis vinifera (Grape), this protein is Anthocyanidin reductase ((2S)-flavan-3-ol-forming).